The sequence spans 246 residues: Transmembrane and ubiquitin-like domain-containing protein 1 (246 aa).

Residues 2-30 (TLIEGVGDEVTVLFSVLACLLVLALAWVS) form a required to release iHOPS from membranes region. The chain crosses the membrane as a helical span at residues 11-31 (VTVLFSVLACLLVLALAWVST). The disordered stretch occupies residues 34-101 (AEGGDPLPQP…TPPAPDSPQE (68 aa)). Positions 40–50 (LPQPSGTPTPS) are enriched in pro residues. Phosphothreonine is present on Thr71. Ser73 is subject to Phosphoserine. Thr92 is subject to Phosphothreonine. Phosphoserine occurs at positions 98 and 127. The 74-residue stretch at 103 to 176 (LVLRLKFLND…LHCHVSTRVG (74 aa)) folds into the Ubiquitin-like domain. Helical transmembrane passes span 195 to 215 (IGSLLLPLLLLLLLLLWYCQI) and 221 to 241 (FPLTATLGLAGFTLLLSLLAF).

Interacts with EEF1A1, GRIA2, GRIP1, CAMLG, TUBG1. Interacts with NPM1 and CDKN2A; TMUB1 can enhance interaction between NPM1 and CDKN2A and is proposed to bridge the proteins; proposed to be mediated by iHOPS. Interacts with ERLIN2 and AMFR; TMUB1 promotes the interaction of ERLIN2 with AMFR. Post-translationally, processed by regulated intramembrane proteolysis (RIP)in the N-terminus to release iHOPS from membranes. Ubiquitously expressed with highest levels in mammary and thyroid glands, bone marrow and spleen; limited expression in cardiac, pancreatic and ovarian tissues.

Its subcellular location is the membrane. It localises to the postsynaptic cell membrane. The protein resides in the recycling endosome. It is found in the cytoplasm. The protein localises to the nucleus. Its subcellular location is the nucleolus. It localises to the cytoskeleton. The protein resides in the microtubule organizing center. It is found in the centrosome. Functionally, involved in sterol-regulated ubiquitination and degradation of HMG-CoA reductase HMGCR. Involved in positive regulation of AMPA-selective glutamate receptor GRIA2 recycling to the cell surface. Acts as a negative regulator of hepatocyte growth during regeneration. In terms of biological role, may contribute to the regulation of translation during cell-cycle progression. May contribute to the regulation of cell proliferation. May be involved in centrosome assembly. Modulates stabilization and nucleolar localization of tumor suppressor CDKN2A and enhances association between CDKN2A and NPM1. This is Transmembrane and ubiquitin-like domain-containing protein 1 (TMUB1) from Homo sapiens (Human).